A 382-amino-acid chain; its full sequence is MSLDFLPFSRPSIGEDEIAAVEQVLRSGWITTGPKNQELEQRFAERLGCRHAVALSSATGALHVTLLALGIGPGDEVITPSLTWVSTANVITLLGATPVFVDVDRDTLMCSAQAVEAAIGPRTRAIVPVHYAGSTLDLEGLRTVAGRHGIALVEDAAHAVGSEYRGRPVGSRGTAIFSFHAIKNLTCAEGAMFVSDDSALAERVRRLKFHGLGVDAYDRLSHGRKPQAEVIEPGFKYNLADLNAALALVQLKRLDALNARRQALAERYLERLAGLPLAPLGLPAHKQRHAWHLFILRIDAEVCGLGRDAFMEALKARGIGSGIHFIASHLHHYYRQRQPRLSLPNSEWNSARLCSIPLFPDMRDDDIERVARAIEEILEKRR.

Lys-183 carries the post-translational modification N6-(pyridoxal phosphate)lysine.

Belongs to the DegT/DnrJ/EryC1 family. ArnB subfamily. As to quaternary structure, homodimer. It depends on pyridoxal 5'-phosphate as a cofactor.

It carries out the reaction UDP-4-amino-4-deoxy-beta-L-arabinose + 2-oxoglutarate = UDP-beta-L-threo-pentopyranos-4-ulose + L-glutamate. The protein operates within nucleotide-sugar biosynthesis; UDP-4-deoxy-4-formamido-beta-L-arabinose biosynthesis; UDP-4-deoxy-4-formamido-beta-L-arabinose from UDP-alpha-D-glucuronate: step 2/3. It functions in the pathway bacterial outer membrane biogenesis; lipopolysaccharide biosynthesis. Functionally, catalyzes the conversion of UDP-4-keto-arabinose (UDP-Ara4O) to UDP-4-amino-4-deoxy-L-arabinose (UDP-L-Ara4N). The modified arabinose is attached to lipid A and is required for resistance to polymyxin and cationic antimicrobial peptides. In Pseudomonas aeruginosa (strain ATCC 15692 / DSM 22644 / CIP 104116 / JCM 14847 / LMG 12228 / 1C / PRS 101 / PAO1), this protein is UDP-4-amino-4-deoxy-L-arabinose--oxoglutarate aminotransferase.